The following is a 182-amino-acid chain: Lipid A acyltransferase PagP (182 aa).

A signal peptide spans 1–21; sequence MTQYFRALAFFLLLVPATAMA. C22 carries the N-palmitoyl cysteine lipid modification. C22 carries S-diacylglycerol cysteine lipidation. Catalysis depends on residues H55, D98, and S99.

It belongs to the lipid A palmitoyltransferase family. In terms of assembly, homodimer.

The protein resides in the cell outer membrane. It catalyses the reaction a lipid A + a 1,2-diacyl-sn-glycero-3-phosphocholine = a hepta-acyl lipid A + a 2-acyl-sn-glycero-3-phosphocholine. It carries out the reaction a lipid IVA + a 1,2-diacyl-sn-glycero-3-phosphocholine = a lipid IVB + a 2-acyl-sn-glycero-3-phosphocholine. The catalysed reaction is a lipid IIA + a 1,2-diacyl-sn-glycero-3-phosphocholine = a lipid IIB + a 2-acyl-sn-glycero-3-phosphocholine. In terms of biological role, transfers a fatty acid residue from the sn-1 position of a phospholipid to the N-linked hydroxyfatty acid chain on the proximal unit of lipid A or its precursors. The sequence is that of Lipid A acyltransferase PagP from Bordetella parapertussis (strain 12822 / ATCC BAA-587 / NCTC 13253).